Reading from the N-terminus, the 293-residue chain is Pyridoxal 5'-phosphate synthase subunit PdxS (293 aa).

Position 23 (Asp23) interacts with D-ribose 5-phosphate. The active-site Schiff-base intermediate with D-ribose 5-phosphate is Lys80. Position 152 (Gly152) interacts with D-ribose 5-phosphate. D-glyceraldehyde 3-phosphate is bound at residue Arg164. D-ribose 5-phosphate-binding positions include Gly213 and 234–235; that span reads GS.

This sequence belongs to the PdxS/SNZ family. As to quaternary structure, in the presence of PdxT, forms a dodecamer of heterodimers.

The enzyme catalyses aldehydo-D-ribose 5-phosphate + D-glyceraldehyde 3-phosphate + L-glutamine = pyridoxal 5'-phosphate + L-glutamate + phosphate + 3 H2O + H(+). The protein operates within cofactor biosynthesis; pyridoxal 5'-phosphate biosynthesis. Functionally, catalyzes the formation of pyridoxal 5'-phosphate from ribose 5-phosphate (RBP), glyceraldehyde 3-phosphate (G3P) and ammonia. The ammonia is provided by the PdxT subunit. Can also use ribulose 5-phosphate and dihydroxyacetone phosphate as substrates, resulting from enzyme-catalyzed isomerization of RBP and G3P, respectively. The protein is Pyridoxal 5'-phosphate synthase subunit PdxS of Syntrophus aciditrophicus (strain SB).